The primary structure comprises 94 residues: 2S albumin-like cysteine protease inhibitor (94 aa).

Disulfide bonds link Cys-12–Cys-35, Cys-36–Cys-82, and Cys-48–Cys-89.

Belongs to the 2S seed storage albumins family. Expressed in seeds (at protein level).

In terms of biological role, cysteine protease inhibitor that likely functions in defense against insects by inhibiting cysteine proteases in the midgut of herbivore insects such as C.maculatus. Selectively inhibits cathepsin L, as well as papain, ficin and bromelain with lower efficiency. Shows antitumor activity, inhibiting the growth of prostate cancer cell lines PC3 and DU145, and the gastric cancer cell line Hs746T. No activity against cathepsin B or serine proteases (trypsin, human plasma kallikrein and elastase). The protein is 2S albumin-like cysteine protease inhibitor of Araucaria angustifolia (Brazilian pine tree).